A 332-amino-acid polypeptide reads, in one-letter code: RNA polymerase II holoenzyme cyclin-like subunit (332 aa).

Residues 74 to 175 enclose the Cyclin N-terminal domain; sequence RIYCYFLIMK…LIEELQSYMI (102 aa).

This sequence belongs to the cyclin family. Cyclin C subfamily. In terms of assembly, component of the SRB8-11 complex, a regulatory module of the Mediator complex.

Its subcellular location is the nucleus. Its function is as follows. Component of the SRB8-11 complex. The SRB8-11 complex is a regulatory module of the Mediator complex which is itself involved in regulation of basal and activated RNA polymerase II-dependent transcription. The SRB8-11 complex may be involved in the transcriptional repression of a subset of genes regulated by Mediator. It may inhibit the association of the Mediator complex with RNA polymerase II to form the holoenzyme complex. The SRB8-11 complex phosphorylates the C-terminal domain (CTD) of the largest subunit of RNA polymerase II. This Eremothecium gossypii (strain ATCC 10895 / CBS 109.51 / FGSC 9923 / NRRL Y-1056) (Yeast) protein is RNA polymerase II holoenzyme cyclin-like subunit (SSN8).